We begin with the raw amino-acid sequence, 2179 residues long: Genome polyprotein (2179 aa).

4 disordered regions span residues 503–531, 623–678, 703–738, and 753–847; these read FSKD…PTGD, QPQK…YPIQ, RAKK…GDQF, and EPSV…PPKM. Composition is skewed to polar residues over residues 630–642 and 659–678; these read DTPS…QPFH and TTFA…YPIQ. The segment covering 758–770 has biased composition (polar residues); sequence SEDTSSQSYISTE. Residues 783-806 show a composition bias toward low complexity; it reads SEESTQLSQLSSSSNDSPENNENT. Over residues 819–831 the composition is skewed to acidic residues; that stretch reads EISEVEDEVDGMT. The CCHC-type zinc-finger motif lies at 1112 to 1125; sequence CFTCGKIGHFSRNC. Catalysis depends on aspartate 1226, which acts as the For protease activity; shared with dimeric partner. The region spanning 1409–1591 is the Reverse transcriptase domain; it reads QQFDLIEPSD…NKIQFLGMDF (183 aa). Mg(2+)-binding residues include aspartate 1479, aspartate 1542, and aspartate 1543. Disordered stretches follow at residues 1822–1848, 2114–2144, and 2160–2179; these read QRRT…KLSH, NIVK…KNKC, and YSTK…EPCV. The segment covering 1827-1840 has biased composition (low complexity); sequence SSSTKSKADSSQST. Basic residues predominate over residues 2120–2144; that stretch reads PRKRKGKAKSRSSTRSEKRRAKNKC. A compositionally biased stretch (polar residues) spans 2162-2179; sequence TKPSTPSWTQDSSSEPCV.

This sequence belongs to the Petuviruses genome polyprotein family.

It catalyses the reaction DNA(n) + a 2'-deoxyribonucleoside 5'-triphosphate = DNA(n+1) + diphosphate. Functionally, encodes presumably for at least four polypeptides: Movement protein (MP), capsid protein (CP), Protease (PR), and reverse transcriptase (RT). The sequence is that of Genome polyprotein from Petunia vein clearing virus (isolate Shepherd) (PVCV).